We begin with the raw amino-acid sequence, 570 residues long: Proline--tRNA ligase (570 aa).

The protein belongs to the class-II aminoacyl-tRNA synthetase family. ProS type 1 subfamily. As to quaternary structure, homodimer.

The protein localises to the cytoplasm. It catalyses the reaction tRNA(Pro) + L-proline + ATP = L-prolyl-tRNA(Pro) + AMP + diphosphate. Its function is as follows. Catalyzes the attachment of proline to tRNA(Pro) in a two-step reaction: proline is first activated by ATP to form Pro-AMP and then transferred to the acceptor end of tRNA(Pro). As ProRS can inadvertently accommodate and process non-cognate amino acids such as alanine and cysteine, to avoid such errors it has two additional distinct editing activities against alanine. One activity is designated as 'pretransfer' editing and involves the tRNA(Pro)-independent hydrolysis of activated Ala-AMP. The other activity is designated 'posttransfer' editing and involves deacylation of mischarged Ala-tRNA(Pro). The misacylated Cys-tRNA(Pro) is not edited by ProRS. The chain is Proline--tRNA ligase from Desulfotalea psychrophila (strain LSv54 / DSM 12343).